Consider the following 233-residue polypeptide: Putative peroxiredoxin (233 aa).

The 160-residue stretch at 41–200 (AQIGKEAPEF…TIRIVKAIQF (160 aa)) folds into the Thioredoxin domain. The Cysteine sulfenic acid (-SOH) intermediate role is filled by Cys-87.

It belongs to the peroxiredoxin family. AhpC/Prx1 subfamily. In terms of assembly, homodimer; disulfide-linked, upon oxidation.

Its subcellular location is the cell membrane. The enzyme catalyses a hydroperoxide + [thioredoxin]-dithiol = an alcohol + [thioredoxin]-disulfide + H2O. Functionally, thiol-specific peroxidase that catalyzes the reduction of hydrogen peroxide and organic hydroperoxides to water and alcohols, respectively. Plays a role in cell protection against oxidative stress by detoxifying peroxides and as sensor of hydrogen peroxide-mediated signaling events. This chain is Putative peroxiredoxin, found in Entamoeba histolytica (strain ATCC 30459 / HM-1:IMSS / ABRM).